Here is a 91-residue protein sequence, read N- to C-terminus: Small ribosomal subunit protein bS18 (91 aa).

It belongs to the bacterial ribosomal protein bS18 family. As to quaternary structure, part of the 30S ribosomal subunit. Forms a tight heterodimer with protein bS6.

In terms of biological role, binds as a heterodimer with protein bS6 to the central domain of the 16S rRNA, where it helps stabilize the platform of the 30S subunit. This Paraburkholderia phymatum (strain DSM 17167 / CIP 108236 / LMG 21445 / STM815) (Burkholderia phymatum) protein is Small ribosomal subunit protein bS18.